We begin with the raw amino-acid sequence, 319 residues long: Phospho-N-acetylmuramoyl-pentapeptide-transferase (319 aa).

The next 10 membrane-spanning stretches (helical) occupy residues 1–21, 53–73, 77–97, 117–137, 140–160, 172–192, 195–215, 221–241, 249–269, and 298–318; these read MSIL…FLLM, TMGG…VGAW, LNGT…IGMW, FLAQ…EGFQ, FGLT…MVGF, GLVT…ALVQ, TEVA…FPFN, IFMG…VALV, LIIG…VAYF, and GVFW…ILFL.

This sequence belongs to the glycosyltransferase 4 family. MraY subfamily. The cofactor is Mg(2+).

The protein resides in the cell membrane. It catalyses the reaction UDP-N-acetyl-alpha-D-muramoyl-L-alanyl-gamma-D-glutamyl-L-lysyl-D-alanyl-D-alanine + di-trans,octa-cis-undecaprenyl phosphate = Mur2Ac(oyl-L-Ala-gamma-D-Glu-L-Lys-D-Ala-D-Ala)-di-trans,octa-cis-undecaprenyl diphosphate + UMP. The protein operates within cell wall biogenesis; peptidoglycan biosynthesis. Its function is as follows. Catalyzes the initial step of the lipid cycle reactions in the biosynthesis of the cell wall peptidoglycan: transfers peptidoglycan precursor phospho-MurNAc-pentapeptide from UDP-MurNAc-pentapeptide onto the lipid carrier undecaprenyl phosphate, yielding undecaprenyl-pyrophosphoryl-MurNAc-pentapeptide, known as lipid I. The protein is Phospho-N-acetylmuramoyl-pentapeptide-transferase of Limosilactobacillus fermentum (strain NBRC 3956 / LMG 18251) (Lactobacillus fermentum).